The chain runs to 261 residues: 1-(5-phosphoribosyl)-5-[(5-phosphoribosylamino)methylideneamino] imidazole-4-carboxamide isomerase (261 aa).

Asp-15 serves as the catalytic Proton acceptor. The active-site Proton donor is Asp-136.

It belongs to the HisA/HisF family.

It localises to the cytoplasm. It catalyses the reaction 1-(5-phospho-beta-D-ribosyl)-5-[(5-phospho-beta-D-ribosylamino)methylideneamino]imidazole-4-carboxamide = 5-[(5-phospho-1-deoxy-D-ribulos-1-ylimino)methylamino]-1-(5-phospho-beta-D-ribosyl)imidazole-4-carboxamide. It participates in amino-acid biosynthesis; L-histidine biosynthesis; L-histidine from 5-phospho-alpha-D-ribose 1-diphosphate: step 4/9. This is 1-(5-phosphoribosyl)-5-[(5-phosphoribosylamino)methylideneamino] imidazole-4-carboxamide isomerase from Synechococcus sp. (strain JA-2-3B'a(2-13)) (Cyanobacteria bacterium Yellowstone B-Prime).